Here is a 557-residue protein sequence, read N- to C-terminus: uncharacterized protein (557 aa).

Positions 17–38 are disordered; it reads NSAEFSIHSTSNPTNPEEPNIT. The next 9 helical transmembrane spans lie at 60–80, 94–114, 214–234, 261–281, 297–317, 348–368, 407–427, 468–488, and 498–518; these read LSLF…PSVA, GLLW…LSMA, SVGT…ILAM, FAIL…DAPF, GIIL…IVIA, LGIL…NLIA, VIGV…GAVF, IGFC…FPSV, and WTCL…AISG.

The protein belongs to the amino acid-polyamine-organocation (APC) superfamily.

It is found in the membrane. This is an uncharacterized protein from Schizosaccharomyces pombe (strain 972 / ATCC 24843) (Fission yeast).